A 656-amino-acid chain; its full sequence is L-type lectin-domain containing receptor kinase S.1 (656 aa).

The first 29 residues, 1–29 (MSWQWRRRQWPSPLLLILIVLHLVSSSSA), serve as a signal peptide directing secretion. The interval 30 to 273 (IDFLYNSFSS…ARRILAWSLS (244 aa)) is legume-lectin like. Over 30–304 (IDFLYNSFSS…SSSLSTGAIA (275 aa)) the chain is Extracellular. 8 N-linked (GlcNAc...) asparagine glycosylation sites follow: N42, N63, N121, N139, N191, N219, N282, and N293. The chain crosses the membrane as a helical span at residues 305-325 (GIVIGCVVFVALIGFGGYLIW). At 326–656 (KKLMREEEEE…AAADSTAAHA (331 aa)) the chain is on the cytoplasmic side. Residues 361–639 (FSNDRLLGSG…LLGSPQEDLL (279 aa)) form the Protein kinase domain. Residues 367 to 375 (LGSGGFGKV) and K389 each bind ATP. The Proton acceptor role is filled by D485.

The protein in the C-terminal section; belongs to the protein kinase superfamily. Ser/Thr protein kinase family. It in the N-terminal section; belongs to the leguminous lectin family.

It localises to the cell membrane. The catalysed reaction is L-seryl-[protein] + ATP = O-phospho-L-seryl-[protein] + ADP + H(+). It catalyses the reaction L-threonyl-[protein] + ATP = O-phospho-L-threonyl-[protein] + ADP + H(+). Involved in resistance response to the pathogenic oomycetes Phytophthora infestans and Phytophthora capsici and to the pathogenic bacteria Pseudomonas syringae. This Arabidopsis thaliana (Mouse-ear cress) protein is L-type lectin-domain containing receptor kinase S.1.